The following is a 379-amino-acid chain: Homoserine O-succinyltransferase (379 aa).

The 310-residue stretch at 51-360 folds into the AB hydrolase-1 domain; it reads NAVLICHALS…DSPYGHDAFL (310 aa). Serine 157 functions as the Nucleophile in the catalytic mechanism. A substrate-binding site is contributed by arginine 227. Catalysis depends on residues aspartate 323 and histidine 356. Aspartate 357 serves as a coordination point for substrate.

The protein belongs to the AB hydrolase superfamily. MetX family. As to quaternary structure, homodimer.

The protein resides in the cytoplasm. The enzyme catalyses L-homoserine + succinyl-CoA = O-succinyl-L-homoserine + CoA. It functions in the pathway amino-acid biosynthesis; L-methionine biosynthesis via de novo pathway; O-succinyl-L-homoserine from L-homoserine: step 1/1. Its activity is regulated as follows. Requires MetW for activity. Transfers a succinyl group from succinyl-CoA to L-homoserine, forming succinyl-L-homoserine. This is Homoserine O-succinyltransferase from Pseudomonas putida (strain ATCC 47054 / DSM 6125 / CFBP 8728 / NCIMB 11950 / KT2440).